Here is a 315-residue protein sequence, read N- to C-terminus: Acetyl-coenzyme A carboxylase carboxyl transferase subunit alpha (315 aa).

The region spanning 40–293 is the CoA carboxyltransferase C-terminal domain; sequence LQDKSKTLTE…REELSSQLAM (254 aa).

Belongs to the AccA family. Acetyl-CoA carboxylase is a heterohexamer composed of biotin carboxyl carrier protein (AccB), biotin carboxylase (AccC) and two subunits each of ACCase subunit alpha (AccA) and ACCase subunit beta (AccD).

The protein localises to the cytoplasm. The catalysed reaction is N(6)-carboxybiotinyl-L-lysyl-[protein] + acetyl-CoA = N(6)-biotinyl-L-lysyl-[protein] + malonyl-CoA. It participates in lipid metabolism; malonyl-CoA biosynthesis; malonyl-CoA from acetyl-CoA: step 1/1. In terms of biological role, component of the acetyl coenzyme A carboxylase (ACC) complex. First, biotin carboxylase catalyzes the carboxylation of biotin on its carrier protein (BCCP) and then the CO(2) group is transferred by the carboxyltransferase to acetyl-CoA to form malonyl-CoA. The protein is Acetyl-coenzyme A carboxylase carboxyl transferase subunit alpha of Pseudomonas savastanoi pv. phaseolicola (strain 1448A / Race 6) (Pseudomonas syringae pv. phaseolicola (strain 1448A / Race 6)).